A 513-amino-acid chain; its full sequence is Maturase K (513 aa).

This sequence belongs to the intron maturase 2 family. MatK subfamily.

It localises to the plastid. It is found in the chloroplast. Its function is as follows. Usually encoded in the trnK tRNA gene intron. Probably assists in splicing its own and other chloroplast group II introns. The polypeptide is Maturase K (Astrebla lappacea (Curly Mitchell grass)).